Consider the following 263-residue polypeptide: Ribosomal RNA small subunit methyltransferase J (263 aa).

Residues 115 to 116, 131 to 132, and D181 each bind S-adenosyl-L-methionine; these read RD and ER.

Belongs to the methyltransferase superfamily. RsmJ family.

The protein localises to the cytoplasm. The enzyme catalyses guanosine(1516) in 16S rRNA + S-adenosyl-L-methionine = N(2)-methylguanosine(1516) in 16S rRNA + S-adenosyl-L-homocysteine + H(+). Specifically methylates the guanosine in position 1516 of 16S rRNA. In Hahella chejuensis (strain KCTC 2396), this protein is Ribosomal RNA small subunit methyltransferase J.